Reading from the N-terminus, the 280-residue chain is 4-diphosphocytidyl-2-C-methyl-D-erythritol kinase (280 aa).

K8 is an active-site residue. 91–101 (PVSAGLAGGST) is an ATP binding site. D133 is a catalytic residue.

It belongs to the GHMP kinase family. IspE subfamily.

The enzyme catalyses 4-CDP-2-C-methyl-D-erythritol + ATP = 4-CDP-2-C-methyl-D-erythritol 2-phosphate + ADP + H(+). It functions in the pathway isoprenoid biosynthesis; isopentenyl diphosphate biosynthesis via DXP pathway; isopentenyl diphosphate from 1-deoxy-D-xylulose 5-phosphate: step 3/6. Its function is as follows. Catalyzes the phosphorylation of the position 2 hydroxy group of 4-diphosphocytidyl-2C-methyl-D-erythritol. This is 4-diphosphocytidyl-2-C-methyl-D-erythritol kinase from Clostridium botulinum (strain Alaska E43 / Type E3).